We begin with the raw amino-acid sequence, 380 residues long: Queuine tRNA-ribosyltransferase (380 aa).

Asp-95 acts as the Proton acceptor in catalysis. Substrate-binding positions include 95 to 99 (DSGGF), Asp-149, Gln-192, and Gly-219. Residues 250–256 (GVGSPDS) are RNA binding. Asp-269 acts as the Nucleophile in catalysis. Residues 274-278 (TRIGR) are RNA binding; important for wobble base 34 recognition. 4 residues coordinate Zn(2+): Cys-307, Cys-309, Cys-312, and His-338.

It belongs to the queuine tRNA-ribosyltransferase family. In terms of assembly, homodimer. Within each dimer, one monomer is responsible for RNA recognition and catalysis, while the other monomer binds to the replacement base PreQ1. Zn(2+) is required as a cofactor.

It carries out the reaction 7-aminomethyl-7-carbaguanine + guanosine(34) in tRNA = 7-aminomethyl-7-carbaguanosine(34) in tRNA + guanine. It functions in the pathway tRNA modification; tRNA-queuosine biosynthesis. Catalyzes the base-exchange of a guanine (G) residue with the queuine precursor 7-aminomethyl-7-deazaguanine (PreQ1) at position 34 (anticodon wobble position) in tRNAs with GU(N) anticodons (tRNA-Asp, -Asn, -His and -Tyr). Catalysis occurs through a double-displacement mechanism. The nucleophile active site attacks the C1' of nucleotide 34 to detach the guanine base from the RNA, forming a covalent enzyme-RNA intermediate. The proton acceptor active site deprotonates the incoming PreQ1, allowing a nucleophilic attack on the C1' of the ribose to form the product. After dissociation, two additional enzymatic reactions on the tRNA convert PreQ1 to queuine (Q), resulting in the hypermodified nucleoside queuosine (7-(((4,5-cis-dihydroxy-2-cyclopenten-1-yl)amino)methyl)-7-deazaguanosine). The chain is Queuine tRNA-ribosyltransferase from Geobacillus thermodenitrificans (strain NG80-2).